The chain runs to 309 residues: Dermonecrotic toxin LarSicTox-alphaIB2bi (309 aa).

Residue V1 is a signal peptide. The propeptide occupies R2–R27. The active site involves H38. 2 residues coordinate Mg(2+): E58 and D60. H74 (nucleophile) is an active-site residue. 2 disulfide bridges follow: C78/C84 and C80/C223. D118 contacts Mg(2+). N-linked (GlcNAc...) asparagine glycosylation is present at N286.

It belongs to the arthropod phospholipase D family. Class II subfamily. Requires Mg(2+) as cofactor. In terms of tissue distribution, expressed by the venom gland.

It is found in the secreted. It catalyses the reaction an N-(acyl)-sphingosylphosphocholine = an N-(acyl)-sphingosyl-1,3-cyclic phosphate + choline. The enzyme catalyses N-hexanoyl-sphing-4-enine-1-phosphocholine = N-(hexanoyl)-sphing-4-enine-1,3-cyclic phosphate + choline. The catalysed reaction is N-(dodecanoyl)-sphing-4-enine-1-phosphocholine = N-dodecanoyl-sphing-4-enine-1,3-cyclic phosphate + choline. It carries out the reaction a 1-acyl-sn-glycero-3-phosphocholine = a 1-acyl-sn-glycero-2,3-cyclic phosphate + choline. It catalyses the reaction 1-tetradecanoyl-sn-glycero-3-phosphocholine = 1-tetradecanoyl-sn-glycero-2,3-cyclic phosphate + choline. The enzyme catalyses 1-octanoyl-sn-glycero-3-phosphocholine = 1-octanoyl-sn-glycero-2,3-cyclic phosphate + choline. The catalysed reaction is 1-hexadecanoyl-sn-glycero-3-phosphocholine = 1-hexadecanoyl-sn-glycero-2,3-cyclic phosphate + choline. It carries out the reaction an N-(acyl)-sphingosylphosphoethanolamine = an N-(acyl)-sphingosyl-1,3-cyclic phosphate + ethanolamine. It catalyses the reaction N-dodecanoyl-heptadecasphing-4-enine-1-phosphoethanolamine = N-dodecanoyl-heptadecasphing-4-enine-1,3-cyclic phosphate + ethanolamine. In terms of biological role, dermonecrotic toxins cleave the phosphodiester linkage between the phosphate and headgroup of certain phospholipids (sphingolipid and lysolipid substrates), forming an alcohol (often choline) and a cyclic phosphate. This toxin acts on sphingomyelin (SM) with high activity and on lysophosphatidylcholine (LPC) and ceramide phosphoethanolamine (CPE) with low activity. In vivo, shows potent insecticidal activities. On mammals, induces dermonecrosis, hemolysis, increased vascular permeability, edema, inflammatory response, and platelet aggregation. The chain is Dermonecrotic toxin LarSicTox-alphaIB2bi from Loxosceles arizonica (Arizona brown spider).